The primary structure comprises 356 residues: Phosphate acyltransferase (356 aa).

Belongs to the PlsX family. As to quaternary structure, homodimer. Probably interacts with PlsY.

It is found in the cytoplasm. The enzyme catalyses a fatty acyl-[ACP] + phosphate = an acyl phosphate + holo-[ACP]. It participates in lipid metabolism; phospholipid metabolism. Catalyzes the reversible formation of acyl-phosphate (acyl-PO(4)) from acyl-[acyl-carrier-protein] (acyl-ACP). This enzyme utilizes acyl-ACP as fatty acyl donor, but not acyl-CoA. This Mesorhizobium japonicum (strain LMG 29417 / CECT 9101 / MAFF 303099) (Mesorhizobium loti (strain MAFF 303099)) protein is Phosphate acyltransferase.